We begin with the raw amino-acid sequence, 213 residues long: Ras-related protein Rab-2 (213 aa).

The GTP site is built by Thr-15, Gly-16, Gly-18, Lys-19, Ser-20, Cys-21, Gln-32, Pro-33, His-35, Thr-38, Gly-64, Asn-119, Asp-122, and Ala-150. Ser-20 contacts Mg(2+). A Mg(2+)-binding site is contributed by Thr-38. A disordered region spans residues 190–213 (QHSPTNPSLPGAGGAAGAANSGCC). Residues Cys-212 and Cys-213 are each lipidated (S-geranylgeranyl cysteine).

The protein belongs to the small GTPase superfamily. Rab family. As to quaternary structure, interacts (GTP-bound form) with Vps16A and Vps39; the interaction with Vps39 is probably direct.

The protein localises to the vesicle. It localises to the cytoplasmic vesicle. It is found in the cell projection. The protein resides in the axon. Its subcellular location is the presynapse. The protein localises to the presynaptic active zone. It localises to the golgi apparatus. It is found in the trans-Golgi network. The protein resides in the perikaryon. Its subcellular location is the autophagosome membrane. The protein localises to the autolysosome membrane. The enzyme catalyses GTP + H2O = GDP + phosphate + H(+). In terms of biological role, may be involved in bidirectional endoplasmic reticulum (ER) to Golgi trafficking. Together with Rab7 involved in promoting fusion of autophagosomes and endosomes with lysosomes, probably through recruitment of the HOPS tethering complex. Involved in biosynthetic transport to lysosomes. In larval motor neurons, mediates the biogenesis of presynaptic cargo vesicles and their long-range axonal trafficking to synaptic termini. Not involved in axonal trafficking of mitochondria. During vesicle biogenesis, active zone proteins (including brp/Bruchpilot) and synaptic vesicle proteins (including VGlut) are sorted from the trans-Golgi in a Rab2-dependent manner via, at least, two independent routes. Acts upstream of Arl8 during presynaptic precursor vesicle biogenesis. Associated with lysosomal marker positive presynaptic cargo vesicles during anterograde and retrograde axonal trafficking, probably while in its GTP-bound active state. Involved in the delivery of presynaptic cargos, but not presynapse assembly or active zone function at synaptic termini. Required for autophagocytosis-dependent remodeling of myofibrils and transverse-tubules (T-tubules) during metamorphosis. This is Ras-related protein Rab-2 from Drosophila melanogaster (Fruit fly).